Reading from the N-terminus, the 491-residue chain is Angiopoietin-related protein 1 (491 aa).

Positions 1-23 (MKAFIWTLSVLFFLLMGIGHGRG) are cleaved as a signal peptide. The stretch at 80 to 168 (ITRMDLENLK…LNVTTEMLKM (89 aa)) forms a coiled coil. Residues N160 and N188 are each glycosylated (N-linked (GlcNAc...) asparagine). The region spanning 271–491 (FINEGPYKDC…AVQMLIKPID (221 aa)) is the Fibrinogen C-terminal domain. Cystine bridges form between C280-C309 and C432-C445.

The protein localises to the secreted. This Bos taurus (Bovine) protein is Angiopoietin-related protein 1 (ANGPTL1).